A 369-amino-acid polypeptide reads, in one-letter code: Immunoglobulin superfamily member 5 (369 aa).

An N-terminal signal peptide occupies residues 1–24; the sequence is MEGSWRDVLAVLVILAQLTVSGSS. Ig-like V-type domains are found at residues 25 to 125 and 128 to 217; these read YQII…LSVQ and GTLN…LTVN. Residues 25-239 lie on the Extracellular side of the membrane; it reads YQIIEGPRNV…GEGQALPTWA (215 aa). N-linked (GlcNAc...) asparagine glycans are attached at residues Asn-33 and Asn-45. Cys-46 and Cys-109 are disulfide-bonded. Asn-146, Asn-196, and Asn-217 each carry an N-linked (GlcNAc...) asparagine glycan. Residues Cys-149 and Cys-201 are joined by a disulfide bond. Residues 240–260 form a helical membrane-spanning segment; that stretch reads IILLAVAFSLLLILIIALIII. The Cytoplasmic segment spans residues 261-369; that stretch reads FCCCCVSRRE…PQKIRNVTIV (109 aa). The interval 321-354 is disordered; it reads PKSGEVSLPEQRSSLPQQELDKHRPSPVTHPRVS.

The protein belongs to the immunoglobulin superfamily. Interacts with MAGI1 at tight junctions, forms a tripartite complex with NPHS1. Interacts with LNX1 isoform 2 via its PDZ 2 domain, it may also interact with other isoforms containing this domain. As to expression, in kidney, it is found in glomeruli and in the proximal tubules (at protein level).

The protein localises to the apical cell membrane. It localises to the cell junction. It is found in the tight junction. Functionally, provides, together with MAGI1, an adhesion machinery at tight junctions, which may regulate the permeability of kidney glomerulus and small intestinal epithelial cells. Mediates calcium-independent homophilic cell adhesion. In testis, it may function as a cell adhesion molecule rather than a tight-junction protein. It may participate in the adhesion between spermatogonia-spermatogonia, spermatogonia-Sertoli cells, and Sertoli cells-Sertoli cells. The protein is Immunoglobulin superfamily member 5 (Igsf5) of Rattus norvegicus (Rat).